Here is a 978-residue protein sequence, read N- to C-terminus: Retinoblastoma-related protein 2 (978 aa).

Residues 385-585 (TPVTSAMTTA…EKGSSLYNSL (201 aa)) are domain A. The segment at 385–832 (TPVTSAMTTA…NQVFVPTVKP (448 aa)) is pocket. Residues 586-704 (VVARPSLSTE…PVSGNEKCAV (119 aa)) form a spacer region. A disordered region spans residues 616-645 (QSIHPDGLPPTPSKRWPSAGPDGNCYPQSP). The segment at 705 to 832 (VGVQIFFSKI…NQVFVPTVKP (128 aa)) is domain B. Disordered regions lie at residues 841–878 (STRP…SSSH) and 947–978 (VAGS…KTDS). Residues 850–864 (TNSQIPGSPKSSPFS) are compositionally biased toward polar residues. Residues 958 to 971 (SASSDPAAAFSPLS) are compositionally biased toward low complexity.

This sequence belongs to the retinoblastoma protein (RB) family.

It localises to the nucleus. In terms of biological role, regulator of biological processes that recruits a histone deacetylase to control gene transcription. May play a role in the entry into mitosis, negatively regulating the cell proliferation. Formation of stable complexes with geminiviridae replication-associated proteins may create a cellular environment which favors viral DNA replication. This Oryza sativa subsp. japonica (Rice) protein is Retinoblastoma-related protein 2 (RBR2).